The primary structure comprises 354 residues: DNA polymerase IV (354 aa).

A UmuC domain is found at Ile-8–Gly-189. Residues Asp-12 and Asp-107 each coordinate Mg(2+). Glu-108 is a catalytic residue.

This sequence belongs to the DNA polymerase type-Y family. In terms of assembly, monomer. Mg(2+) is required as a cofactor.

It localises to the cytoplasm. It catalyses the reaction DNA(n) + a 2'-deoxyribonucleoside 5'-triphosphate = DNA(n+1) + diphosphate. In terms of biological role, poorly processive, error-prone DNA polymerase involved in untargeted mutagenesis. Copies undamaged DNA at stalled replication forks, which arise in vivo from mismatched or misaligned primer ends. These misaligned primers can be extended by PolIV. Exhibits no 3'-5' exonuclease (proofreading) activity. May be involved in translesional synthesis, in conjunction with the beta clamp from PolIII. The sequence is that of DNA polymerase IV from Vibrio parahaemolyticus serotype O3:K6 (strain RIMD 2210633).